The chain runs to 352 residues: MAPLFNLMLAILSIFVGSCFSESPTKVQLVGGAHRCEGRVEVEHNGQWGTVCDDGWDRRDVAVVCRELNCGAVIQTPRGASYQPPASEQRVLIQGVDCNGTEDTLAQCELNYDVFDCSHEEDAGAQCENPDSDLLFIPEDVRLVDGPGHCQGRVEVLHQSQWSTVCKAGWNLQVSKVVCRQLGCGRALLTYGSCNKNTQGKGPIWMGKMSCSGQEANLRSCLLSRLENNCTHGEDTWMECEDPFELKLVGGDTPCSGRLEVLHKGSWGSVCDDNWGEKEDQVVCKQLGCGKSLHPSPKTRKIYGPGAGRIWLDDVNCSGKEQSLEFCRHRLWGYHDCTHKEDVEVICTDFDV.

Residues 1-21 (MAPLFNLMLAILSIFVGSCFS) form the signal peptide. SRCR domains lie at 27-128 (VQLV…AQCE), 141-241 (VRLV…MECE), and 246-348 (LKLV…VICT). Cystine bridges form between C36–C70, C52–C117, C65–C127, C98–C108, C166–C230, C179–C240, C211–C221, C255–C289, C271–C337, C284–C347, and C317–C327. N-linked (GlcNAc...) asparagine glycosylation occurs at N99. A glycan (N-linked (GlcNAc...) asparagine) is linked at N229.

Interacts with FASN; the interaction is direct. Interacts (via SRCR2 and SRCR3) with pentameric IgM (via Fc region); disulfide-linked. N-glycosylated. N-glycan at Asn-99 possesses only alpha2,6-sialylated terminals, while Asn-229 possesses both alpha2,6-sialylated and non-sialylated terminals. N-glycosylation increases secretion. In terms of tissue distribution, specifically expressed in tissue macrophages. Expressed in thymus, liver, spleen and lymph nodes. Present in Th17 cells; mainly present in non-pathogenic Th17 cells.

The protein localises to the secreted. The protein resides in the cytoplasm. Functionally, secreted protein that acts as a key regulator of lipid synthesis: mainly expressed by macrophages in lymphoid and inflamed tissues and regulates mechanisms in inflammatory responses, such as infection or atherosclerosis. Able to inhibit lipid droplet size in adipocytes. Following incorporation into mature adipocytes via CD36-mediated endocytosis, associates with cytosolic FASN, inhibiting fatty acid synthase activity and leading to lipolysis, the degradation of triacylglycerols into glycerol and free fatty acids (FFA). CD5L-induced lipolysis occurs with progression of obesity: participates in obesity-associated inflammation following recruitment of inflammatory macrophages into adipose tissues, a cause of insulin resistance and obesity-related metabolic disease. Regulation of intracellular lipids mediated by CD5L has a direct effect on transcription regulation mediated by nuclear receptors ROR-gamma (RORC). Acts as a key regulator of metabolic switch in T-helper Th17 cells. Regulates the expression of pro-inflammatory genes in Th17 cells by altering the lipid content and limiting synthesis of cholesterol ligand of RORC, the master transcription factor of Th17-cell differentiation. CD5L is mainly present in non-pathogenic Th17 cells, where it decreases the content of polyunsaturated fatty acyls (PUFA), affecting two metabolic proteins MSMO1 and CYP51A1, which synthesize ligands of RORC, limiting RORC activity and expression of pro-inflammatory genes. Participates in obesity-associated autoimmunity via its association with IgM, interfering with the binding of IgM to Fcalpha/mu receptor and enhancing the development of long-lived plasma cells that produce high-affinity IgG autoantibodies. Also acts as an inhibitor of apoptosis in macrophages: promotes macrophage survival from the apoptotic effects of oxidized lipids in case of atherosclerosis. Involved in early response to microbial infection against various pathogens by acting as a pattern recognition receptor and by promoting autophagy. The polypeptide is CD5 antigen-like (Cd5l) (Mus musculus (Mouse)).